A 352-amino-acid polypeptide reads, in one-letter code: Bifunctional protein FolD 1, mitochondrial (352 aa).

The transit peptide at 1-23 directs the protein to the mitochondrion; the sequence is MLMIARKALASAHTKAFRLATRD.

Belongs to the tetrahydrofolate dehydrogenase/cyclohydrolase family. As to quaternary structure, homodimer.

The protein resides in the mitochondrion. It catalyses the reaction (6R)-5,10-methylene-5,6,7,8-tetrahydrofolate + NADP(+) = (6R)-5,10-methenyltetrahydrofolate + NADPH. The enzyme catalyses (6R)-5,10-methenyltetrahydrofolate + H2O = (6R)-10-formyltetrahydrofolate + H(+). It functions in the pathway one-carbon metabolism; tetrahydrofolate interconversion. In terms of biological role, catalyzes the oxidation of 5,10-methylenetetrahydrofolate to 5,10-methenyltetrahydrofolate and then the hydrolysis of 5,10-methenyltetrahydrofolate to 10-formyltetrahydrofolate. In Arabidopsis thaliana (Mouse-ear cress), this protein is Bifunctional protein FolD 1, mitochondrial (FOLD1).